A 188-amino-acid chain; its full sequence is F-box only protein 36 (188 aa).

In terms of domain architecture, F-box spans 91 to 137; it reads FDYLERLSDRLLLKIICYLDLEDIASLSQTSSKFEKLCKSDLLWEQI.

Directly interacts with SKP1 and CUL1.

In terms of biological role, substrate-recognition component of the SCF (SKP1-CUL1-F-box protein)-type E3 ubiquitin ligase complex. In Mus musculus (Mouse), this protein is F-box only protein 36 (Fbxo36).